An 837-amino-acid polypeptide reads, in one-letter code: Tuftelin-interacting protein 11 (837 aa).

Composition is skewed to basic and acidic residues over residues 1–13 (MSLS…GEGR) and 53–64 (VWAERDSDDERP). 3 disordered regions span residues 1–21 (MSLS…DDER), 53–72 (VWAE…KRAR), and 85–133 (LKKG…KGFA). Residues 1–50 (MSLSHLYRDGEGRIDDDDDERENFEITDWDLQNEFNPNRQRHWQTKEEAT) form a required for interaction with DHX15 region. Ser2, Ser59, and Ser98 each carry phosphoserine. A compositionally biased stretch (acidic residues) spans 91-102 (EEAELEDSDDEE). Residues 103-116 (KPVKQDDFPKDFGP) show a composition bias toward basic and acidic residues. Ser144 bears the Phosphoserine mark. The G-patch domain maps to 149-195 (TKGIGQKLLQKMGYVPGRGLGKNAQGIINPIEAKQRKGKGAVGAYGS). The interval 179–236 (IEAKQRKGKGAVGAYGSERTTQSMQDFPVVDSEEEAEEEFQKELSQWRKDPSGSKKKP) is disordered. A Phosphoserine modification is found at Ser210. Over residues 217-231 (EFQKELSQWRKDPSG) the composition is skewed to basic and acidic residues. The Nuclear localization signal motif lies at 700 to 705 (VKDKFN). Residues 710 to 734 (IMNRAVSSNVGAYMQPGARENIAYL) form a required for nuclear speckle localization region.

This sequence belongs to the TFP11/STIP family. As to quaternary structure, identified in the spliceosome C complex. Found in the Intron Large (IL) complex, a post-mRNA release spliceosomal complex containing the excised intron, U2, U5 and U6 snRNPs, and splicing factors. Interacts with TUFT1. Interacts with DHX15; indicative for a recruitment of DHX15 to the IL complex. Interacts with GCFC2.

The protein localises to the cytoplasm. It localises to the nucleus. In terms of biological role, involved in pre-mRNA splicing, specifically in spliceosome disassembly during late-stage splicing events. Intron turnover seems to proceed through reactions in two lariat-intron associated complexes termed Intron Large (IL) and Intron Small (IS). In cooperation with DHX15 seems to mediate the transition of the U2, U5 and U6 snRNP-containing IL complex to the snRNP-free IS complex leading to efficient debranching and turnover of excised introns. May play a role in the differentiation of ameloblasts and odontoblasts or in the forming of the enamel extracellular matrix. The polypeptide is Tuftelin-interacting protein 11 (TFIP11) (Homo sapiens (Human)).